A 600-amino-acid chain; its full sequence is Aspartate--tRNA(Asp/Asn) ligase (600 aa).

Position 187 (E187) interacts with L-aspartate. An aspartate region spans residues Q211–K214. Residues R233 and H463 each contribute to the L-aspartate site. R233 to E235 serves as a coordination point for ATP. E497 serves as a coordination point for ATP. An L-aspartate-binding site is contributed by R504. G549–R552 contacts ATP.

It belongs to the class-II aminoacyl-tRNA synthetase family. Type 1 subfamily. In terms of assembly, homodimer.

It is found in the cytoplasm. The catalysed reaction is tRNA(Asx) + L-aspartate + ATP = L-aspartyl-tRNA(Asx) + AMP + diphosphate. Aspartyl-tRNA synthetase with relaxed tRNA specificity since it is able to aspartylate not only its cognate tRNA(Asp) but also tRNA(Asn). Reaction proceeds in two steps: L-aspartate is first activated by ATP to form Asp-AMP and then transferred to the acceptor end of tRNA(Asp/Asn). The chain is Aspartate--tRNA(Asp/Asn) ligase from Wolbachia sp. subsp. Brugia malayi (strain TRS).